The sequence spans 417 residues: Serine hydroxymethyltransferase (417 aa).

Residues Leu120 and 124–126 contribute to the (6S)-5,6,7,8-tetrahydrofolate site; that span reads GHL. Lys229 carries the post-translational modification N6-(pyridoxal phosphate)lysine.

The protein belongs to the SHMT family. In terms of assembly, homodimer. Pyridoxal 5'-phosphate serves as cofactor.

The protein resides in the cytoplasm. It catalyses the reaction (6R)-5,10-methylene-5,6,7,8-tetrahydrofolate + glycine + H2O = (6S)-5,6,7,8-tetrahydrofolate + L-serine. It functions in the pathway one-carbon metabolism; tetrahydrofolate interconversion. It participates in amino-acid biosynthesis; glycine biosynthesis; glycine from L-serine: step 1/1. Its function is as follows. Catalyzes the reversible interconversion of serine and glycine with tetrahydrofolate (THF) serving as the one-carbon carrier. This reaction serves as the major source of one-carbon groups required for the biosynthesis of purines, thymidylate, methionine, and other important biomolecules. Also exhibits THF-independent aldolase activity toward beta-hydroxyamino acids, producing glycine and aldehydes, via a retro-aldol mechanism. The polypeptide is Serine hydroxymethyltransferase (Anaeromyxobacter dehalogenans (strain 2CP-1 / ATCC BAA-258)).